We begin with the raw amino-acid sequence, 236 residues long: MNDSNDTSVAGGAAGADSRVLSADSALTERQRTILDVIRASVTSRGYPPSIREIGDAVGLTSTSSVAHQLRTLERKGYLRRDPNRPRAVNVRGADDAALPPVTEVAGSDALPEPTFVPVLGRIAAGGPILAEEAVEDVFPLPRELVGEGTLFLLKVIGDSMVEAAICDGDWVVVRQQNVADNGDIVAAMIDGEATVKTFKRAGGQVWLMPHNPAFDPIPGNDATVLGKVVTVIRKV.

The interval 1-25 (MNDSNDTSVAGGAAGADSRVLSADS) is disordered. Residues 51-71 (IREIGDAVGLTSTSSVAHQLR) constitute a DNA-binding region (H-T-H motif). Catalysis depends on for autocatalytic cleavage activity residues serine 160 and lysine 197.

It belongs to the peptidase S24 family. Homodimer.

The enzyme catalyses Hydrolysis of Ala-|-Gly bond in repressor LexA.. In terms of biological role, represses a number of genes involved in the response to DNA damage (SOS response), including recA and lexA. In the presence of single-stranded DNA, RecA interacts with LexA causing an autocatalytic cleavage which disrupts the DNA-binding part of LexA, leading to derepression of the SOS regulon and eventually DNA repair. This is LexA repressor from Mycobacterium tuberculosis (strain ATCC 25177 / H37Ra).